Here is a 182-residue protein sequence, read N- to C-terminus: Crossover junction endodeoxyribonuclease RuvC (182 aa).

Catalysis depends on residues Asp-7, Glu-67, and Asp-139. Positions 7, 67, and 139 each coordinate Mg(2+).

The protein belongs to the RuvC family. In terms of assembly, homodimer which binds Holliday junction (HJ) DNA. The HJ becomes 2-fold symmetrical on binding to RuvC with unstacked arms; it has a different conformation from HJ DNA in complex with RuvA. In the full resolvosome a probable DNA-RuvA(4)-RuvB(12)-RuvC(2) complex forms which resolves the HJ. It depends on Mg(2+) as a cofactor.

It localises to the cytoplasm. The enzyme catalyses Endonucleolytic cleavage at a junction such as a reciprocal single-stranded crossover between two homologous DNA duplexes (Holliday junction).. In terms of biological role, the RuvA-RuvB-RuvC complex processes Holliday junction (HJ) DNA during genetic recombination and DNA repair. Endonuclease that resolves HJ intermediates. Cleaves cruciform DNA by making single-stranded nicks across the HJ at symmetrical positions within the homologous arms, yielding a 5'-phosphate and a 3'-hydroxyl group; requires a central core of homology in the junction. The consensus cleavage sequence is 5'-(A/T)TT(C/G)-3'. Cleavage occurs on the 3'-side of the TT dinucleotide at the point of strand exchange. HJ branch migration catalyzed by RuvA-RuvB allows RuvC to scan DNA until it finds its consensus sequence, where it cleaves and resolves the cruciform DNA. The protein is Crossover junction endodeoxyribonuclease RuvC of Bordetella petrii (strain ATCC BAA-461 / DSM 12804 / CCUG 43448).